An 834-amino-acid polypeptide reads, in one-letter code: Glycerol-3-phosphate acyltransferase (834 aa).

The HXXXXD motif signature appears at Cys-309–Ile-314.

The protein belongs to the GPAT/DAPAT family.

The protein localises to the cell inner membrane. The enzyme catalyses sn-glycerol 3-phosphate + an acyl-CoA = a 1-acyl-sn-glycero-3-phosphate + CoA. It participates in phospholipid metabolism; CDP-diacylglycerol biosynthesis; CDP-diacylglycerol from sn-glycerol 3-phosphate: step 1/3. The protein is Glycerol-3-phosphate acyltransferase of Pseudomonas aeruginosa (strain UCBPP-PA14).